The chain runs to 574 residues: Type II methyltransferase M.PaeR7I (574 aa).

Belongs to the N(4)/N(6)-methyltransferase family. Monomer.

The catalysed reaction is a 2'-deoxyadenosine in DNA + S-adenosyl-L-methionine = an N(6)-methyl-2'-deoxyadenosine in DNA + S-adenosyl-L-homocysteine + H(+). Its function is as follows. A gamma subtype methylase, recognizes the double-stranded sequence 5'-CTCGAG-3', methylates A-5 on both strands, and protects the DNA from cleavage by the PaeR7I endonuclease. This is Type II methyltransferase M.PaeR7I (paeR7IM) from Pseudomonas aeruginosa.